Consider the following 375-residue polypeptide: Ornithine carbamoyltransferase, chloroplastic (375 aa).

Carbamoyl phosphate-binding positions include 123-126 (SMRT), arginine 174, histidine 201, and glutamine 204. L-ornithine-binding residues include asparagine 232, aspartate 293, serine 297, and methionine 298. Cysteine 333 serves as the catalytic Proton acceptor. Carbamoyl phosphate contacts are provided by residues 333–334 (CL) and arginine 361.

It belongs to the aspartate/ornithine carbamoyltransferase superfamily. OTCase family. Homotrimer.

The protein resides in the plastid. It is found in the chloroplast. It catalyses the reaction carbamoyl phosphate + L-ornithine = L-citrulline + phosphate + H(+). This is Ornithine carbamoyltransferase, chloroplastic (ARGF) from Pisum sativum (Garden pea).